The following is a 486-amino-acid chain: Cysteine--tRNA ligase (486 aa).

Residue Cys-27 coordinates Zn(2+). A 'HIGH' region motif is present at residues 29–39 (PTTYNFIHLGN). Zn(2+) contacts are provided by Cys-207, His-232, and Glu-236. The 'KMSKS' region signature appears at 264 to 268 (KMSKS). Residue Lys-267 coordinates ATP.

It belongs to the class-I aminoacyl-tRNA synthetase family. In terms of assembly, monomer. Zn(2+) serves as cofactor.

The protein resides in the cytoplasm. The catalysed reaction is tRNA(Cys) + L-cysteine + ATP = L-cysteinyl-tRNA(Cys) + AMP + diphosphate. This chain is Cysteine--tRNA ligase, found in Desulforamulus reducens (strain ATCC BAA-1160 / DSM 100696 / MI-1) (Desulfotomaculum reducens).